Reading from the N-terminus, the 376-residue chain is Chaperone protein DnaJ (376 aa).

Residues 5 to 70 (DYYEVLGVGR…DKKAAYDQFG (66 aa)) enclose the J domain. The CR-type zinc-finger motif lies at 132–210 (GLTKELRIPT…CHGDGRVEKS (79 aa)). Positions 145, 148, 162, 165, 184, 187, 198, and 201 each coordinate Zn(2+). CXXCXGXG motif repeat units follow at residues 145-152 (CDLCDGSG), 162-169 (CTTCHGQG), 184-191 (CPTCHGRG), and 198-205 (CSKCHGDG).

It belongs to the DnaJ family. Homodimer. The cofactor is Zn(2+).

The protein resides in the cytoplasm. Functionally, participates actively in the response to hyperosmotic and heat shock by preventing the aggregation of stress-denatured proteins and by disaggregating proteins, also in an autonomous, DnaK-independent fashion. Unfolded proteins bind initially to DnaJ; upon interaction with the DnaJ-bound protein, DnaK hydrolyzes its bound ATP, resulting in the formation of a stable complex. GrpE releases ADP from DnaK; ATP binding to DnaK triggers the release of the substrate protein, thus completing the reaction cycle. Several rounds of ATP-dependent interactions between DnaJ, DnaK and GrpE are required for fully efficient folding. Also involved, together with DnaK and GrpE, in the DNA replication of plasmids through activation of initiation proteins. The polypeptide is Chaperone protein DnaJ (Shewanella sp. (strain W3-18-1)).